Consider the following 160-residue polypeptide: MPFERFVQTGRIAKASAGPLKGRLVAIVDVIDQNRVLVDGPLTGVPRQEYRLNNLHLTKYRIKFPYTAPTRIVRKAWVDSDLKAQWKVSPWSVKAQNICKRSQLNDFDRFKLRYAKRQRNKLLTIAFNTLKKRTKSDGTPRILKKDRRERLRAEKAKAKK.

The tract at residues 136-160 (SDGTPRILKKDRRERLRAEKAKAKK) is disordered. The span at 146–160 (DRRERLRAEKAKAKK) shows a compositional bias: basic and acidic residues.

The protein belongs to the eukaryotic ribosomal protein eL14 family.

The sequence is that of Large ribosomal subunit protein eL14 (RpL14) from Drosophila virilis (Fruit fly).